The following is a 198-amino-acid chain: Peptidyl-tRNA hydrolase (198 aa).

Tyr-15 contributes to the tRNA binding site. The active-site Proton acceptor is His-20. Residues Phe-66, Asn-68, and Asn-114 each contribute to the tRNA site.

Belongs to the PTH family. In terms of assembly, monomer.

It is found in the cytoplasm. It carries out the reaction an N-acyl-L-alpha-aminoacyl-tRNA + H2O = an N-acyl-L-amino acid + a tRNA + H(+). In terms of biological role, hydrolyzes ribosome-free peptidyl-tRNAs (with 1 or more amino acids incorporated), which drop off the ribosome during protein synthesis, or as a result of ribosome stalling. Catalyzes the release of premature peptidyl moieties from peptidyl-tRNA molecules trapped in stalled 50S ribosomal subunits, and thus maintains levels of free tRNAs and 50S ribosomes. The sequence is that of Peptidyl-tRNA hydrolase from Cupriavidus taiwanensis (strain DSM 17343 / BCRC 17206 / CCUG 44338 / CIP 107171 / LMG 19424 / R1) (Ralstonia taiwanensis (strain LMG 19424)).